The chain runs to 359 residues: Adenosine 3'-phospho 5'-phosphosulfate transporter 1 (359 aa).

The next 7 membrane-spanning stretches (helical) occupy residues 26 to 46 (NMKLALATGGIMGSFLLYGIL), 68 to 88 (STFLVLSNRVFAALMAIVIVL), 157 to 177 (YSIALTITTGCMIFFLTGKIS), 184 to 204 (TSYGIILMALYMFFDSFTSTF), 228 to 248 (SIISVFILILNGRLFPAIEFI), 254 to 276 (VFFDSTMLSASAGLGQMVIYYTI), and 300 to 320 (TLIYLHPLSNTQWIGALLVFG). The tract at residues 332–359 (KKHGGHSHGGSNAATTTTPSNNSNNTEK) is disordered. The segment covering 340–359 (GGSNAATTTTPSNNSNNTEK) has biased composition (low complexity).

This sequence belongs to the nucleotide-sugar transporter family. SLC35B subfamily.

The protein localises to the golgi apparatus membrane. It carries out the reaction 3'-phosphoadenylyl sulfate(in) + adenosine 3',5'-bisphosphate(out) = 3'-phosphoadenylyl sulfate(out) + adenosine 3',5'-bisphosphate(in). In terms of biological role, probably functions as a 3'-phosphoadenylyl sulfate:adenosine 3',5'-bisphosphate antiporter at the Golgi membranes. Mediates the transport from the cytosol into the lumen of the Golgi of 3'-phosphoadenylyl sulfate/adenosine 3'-phospho 5'-phosphosulfate (PAPS), a universal sulfuryl donor for sulfation events that take place in that compartment. This Dictyostelium discoideum (Social amoeba) protein is Adenosine 3'-phospho 5'-phosphosulfate transporter 1 (slc35b2).